Consider the following 256-residue polypeptide: Geranylgeranylglyceryl phosphate synthase (256 aa).

Mg(2+)-binding residues include aspartate 28 and serine 53. Sn-glycerol 1-phosphate-binding positions include 172 to 178, 203 to 204, and 225 to 226; these read YLEAGSG, GG, and GT.

This sequence belongs to the GGGP/HepGP synthase family. Group II subfamily. The cofactor is Mg(2+).

It is found in the cytoplasm. The catalysed reaction is sn-glycerol 1-phosphate + (2E,6E,10E)-geranylgeranyl diphosphate = sn-3-O-(geranylgeranyl)glycerol 1-phosphate + diphosphate. It participates in membrane lipid metabolism; glycerophospholipid metabolism. Its function is as follows. Prenyltransferase that catalyzes the transfer of the geranylgeranyl moiety of geranylgeranyl diphosphate (GGPP) to the C3 hydroxyl of sn-glycerol-1-phosphate (G1P). This reaction is the first ether-bond-formation step in the biosynthesis of archaeal membrane lipids. The sequence is that of Geranylgeranylglyceryl phosphate synthase from Methanococcus maripaludis (strain C6 / ATCC BAA-1332).